A 191-amino-acid chain; its full sequence is uncharacterized protein (191 aa).

An HTH tetR-type domain is found at 5 to 65 (GDSREKILHT…IEAVTYTGKI (61 aa)). A DNA-binding region (H-T-H motif) is located at residues 28–47 (GLNQIVKESGAPKGSLYHFF).

This is an uncharacterized protein from Bacillus subtilis (strain 168).